Consider the following 603-residue polypeptide: UvrABC system protein C (603 aa).

Residues 17 to 94 (TTSGCYKMLN…IKTHKPDYNV (78 aa)) enclose the GIY-YIG domain. In terms of domain architecture, UVR spans 199–234 (SEILSQIDIKLKLAVQKEDFETAIKLKEMKSSLIEI).

Belongs to the UvrC family. As to quaternary structure, interacts with UvrB in an incision complex.

Its subcellular location is the cytoplasm. The UvrABC repair system catalyzes the recognition and processing of DNA lesions. UvrC both incises the 5' and 3' sides of the lesion. The N-terminal half is responsible for the 3' incision and the C-terminal half is responsible for the 5' incision. This is UvrABC system protein C from Borrelia garinii subsp. bavariensis (strain ATCC BAA-2496 / DSM 23469 / PBi) (Borreliella bavariensis).